A 242-amino-acid chain; its full sequence is GATA zinc finger domain-containing protein 1 (242 aa).

The GATA-type zinc-finger motif lies at Cys-9–Cys-33. Residues Gly-44–Lys-85 are disordered. Residues Ala-45–Asn-54 show a composition bias toward low complexity.

It localises to the nucleus. Functionally, component of some chromatin complex recruited to chromatin sites methylated 'Lys-4' of histone H3 (H3K4me), with a preference for trimethylated form (H3K4me3). This is GATA zinc finger domain-containing protein 1 (gatad1) from Danio rerio (Zebrafish).